A 101-amino-acid chain; its full sequence is Large ribosomal subunit protein bL9m (101 aa).

A mitochondrion-targeting transit peptide spans 1 to 32 (MSIMKPTTRFFRFNSLELAVSPFQRIYGQLRF).

Belongs to the bacterial ribosomal protein bL9 family. As to quaternary structure, component of the mitochondrial large ribosomal subunit (mt-LSU). Mature yeast 74S mitochondrial ribosomes consist of a small (37S) and a large (54S) subunit. The 37S small subunit contains a 15S ribosomal RNA (15S mt-rRNA) and at least 32 different proteins. The 54S large subunit contains a 21S rRNA (21S mt-rRNA) and at least 45 different proteins.

It is found in the mitochondrion. Component of the mitochondrial ribosome (mitoribosome), a dedicated translation machinery responsible for the synthesis of mitochondrial genome-encoded proteins, including at least some of the essential transmembrane subunits of the mitochondrial respiratory chain. The mitoribosomes are attached to the mitochondrial inner membrane and translation products are cotranslationally integrated into the membrane. This chain is Large ribosomal subunit protein bL9m, found in Schizosaccharomyces pombe (strain 972 / ATCC 24843) (Fission yeast).